The primary structure comprises 185 residues: uncharacterized protein (185 aa).

Position 1 is an N-acetylmethionine (M1). Composition is skewed to basic and acidic residues over residues 1-18 (MDAF…QDKQ), 26-47 (TPSD…TTEE), and 59-71 (SNED…PVLE). 2 disordered regions span residues 1 to 71 (MDAF…PVLE) and 155 to 185 (DHDR…DGLL). Positions 170 to 185 (LPEELETDQDFLDGLL) are enriched in acidic residues.

This is an uncharacterized protein from Saccharomyces cerevisiae (strain ATCC 204508 / S288c) (Baker's yeast).